Consider the following 1042-residue polypeptide: Isoleucine--tRNA ligase (1042 aa).

The 'HIGH' region motif lies at 59–69 (PFANGLPHYGH). The 'KMSKS' region signature appears at 619–623 (KMSKS). Residue Lys-622 coordinates ATP.

This sequence belongs to the class-I aminoacyl-tRNA synthetase family. IleS type 2 subfamily. In terms of assembly, monomer. It depends on Zn(2+) as a cofactor.

The protein resides in the cytoplasm. It catalyses the reaction tRNA(Ile) + L-isoleucine + ATP = L-isoleucyl-tRNA(Ile) + AMP + diphosphate. Its function is as follows. Catalyzes the attachment of isoleucine to tRNA(Ile). As IleRS can inadvertently accommodate and process structurally similar amino acids such as valine, to avoid such errors it has two additional distinct tRNA(Ile)-dependent editing activities. One activity is designated as 'pretransfer' editing and involves the hydrolysis of activated Val-AMP. The other activity is designated 'posttransfer' editing and involves deacylation of mischarged Val-tRNA(Ile). In Nocardia farcinica (strain IFM 10152), this protein is Isoleucine--tRNA ligase.